We begin with the raw amino-acid sequence, 253 residues long: H repeat-associated putative transposase YbfD (253 aa).

This sequence belongs to the transposase 11 family.

This chain is H repeat-associated putative transposase YbfD (ybfD), found in Escherichia coli (strain K12).